Reading from the N-terminus, the 165-residue chain is Urease accessory protein UreE (165 aa).

Belongs to the UreE family.

The protein localises to the cytoplasm. In terms of biological role, involved in urease metallocenter assembly. Binds nickel. Probably functions as a nickel donor during metallocenter assembly. The polypeptide is Urease accessory protein UreE (Flavobacterium johnsoniae (strain ATCC 17061 / DSM 2064 / JCM 8514 / BCRC 14874 / CCUG 350202 / NBRC 14942 / NCIMB 11054 / UW101) (Cytophaga johnsonae)).